The sequence spans 208 residues: MAKVSLFKQDGSQAGEVTLNDSVFGIEPNESVVFDVVISQRASLRQGTHAHKNRSAVSGGGKKPWRQKGTGRARQGSTRSPQWRGGGTVFGPNPRSYAYKLPQKVRQLALKSVYSTKVTDGKLIAVDTLDFAAPKTAEFAKVISALSIERKVLVVLPNEGNEFAELSARNLENVKVTTANSASVLDIVSADKLLVVQSALTQIEEVLA.

Positions 45-89 (RQGTHAHKNRSAVSGGGKKPWRQKGTGRARQGSTRSPQWRGGGTV) are disordered.

This sequence belongs to the universal ribosomal protein uL4 family. In terms of assembly, part of the 50S ribosomal subunit.

In terms of biological role, one of the primary rRNA binding proteins, this protein initially binds near the 5'-end of the 23S rRNA. It is important during the early stages of 50S assembly. It makes multiple contacts with different domains of the 23S rRNA in the assembled 50S subunit and ribosome. Its function is as follows. Forms part of the polypeptide exit tunnel. The protein is Large ribosomal subunit protein uL4 of Lactococcus lactis subsp. cremoris (strain MG1363).